The sequence spans 114 residues: T cell receptor beta variable 10-2 (114 aa).

Positions 1–21 are cleaved as a signal peptide; that stretch reads MGTRLFFYVALCLLWAGHRDA. Residues 22-114 enclose the Ig-like domain; it reads GITQSPRYKI…TSVYFCASSE (93 aa). An intrachain disulfide couples cysteine 42 to cysteine 110.

Alpha-beta TR is a heterodimer composed of an alpha and beta chain; disulfide-linked. The alpha-beta TR is associated with the transmembrane signaling CD3 coreceptor proteins to form the TR-CD3 (TcR or TCR). The assembly of alpha-beta TR heterodimers with CD3 occurs in the endoplasmic reticulum where a single alpha-beta TR heterodimer associates with one CD3D-CD3E heterodimer, one CD3G-CD3E heterodimer and one CD247 homodimer forming a stable octameric structure. CD3D-CD3E and CD3G-CD3E heterodimers preferentially associate with TR alpha and TR beta chains, respectively. The association of the CD247 homodimer is the last step of TcR assembly in the endoplasmic reticulum and is required for transport to the cell surface.

The protein resides in the cell membrane. In terms of biological role, v region of the variable domain of T cell receptor (TR) beta chain that participates in the antigen recognition. Alpha-beta T cell receptors are antigen specific receptors which are essential to the immune response and are present on the cell surface of T lymphocytes. Recognize peptide-major histocompatibility (MH) (pMH) complexes that are displayed by antigen presenting cells (APC), a prerequisite for efficient T cell adaptive immunity against pathogens. Binding of alpha-beta TR to pMH complex initiates TR-CD3 clustering on the cell surface and intracellular activation of LCK that phosphorylates the ITAM motifs of CD3G, CD3D, CD3E and CD247 enabling the recruitment of ZAP70. In turn ZAP70 phosphorylates LAT, which recruits numerous signaling molecules to form the LAT signalosome. The LAT signalosome propagates signal branching to three major signaling pathways, the calcium, the mitogen-activated protein kinase (MAPK) kinase and the nuclear factor NF-kappa-B (NF-kB) pathways, leading to the mobilization of transcription factors that are critical for gene expression and essential for T cell growth and differentiation. The T cell repertoire is generated in the thymus, by V-(D)-J rearrangement. This repertoire is then shaped by intrathymic selection events to generate a peripheral T cell pool of self-MH restricted, non-autoaggressive T cells. Post-thymic interaction of alpha-beta TR with the pMH complexes shapes TR structural and functional avidity. This Homo sapiens (Human) protein is T cell receptor beta variable 10-2.